The following is a 431-amino-acid chain: Argininosuccinate lyase (431 aa).

The protein belongs to the lyase 1 family. Argininosuccinate lyase subfamily.

The protein resides in the cytoplasm. It catalyses the reaction 2-(N(omega)-L-arginino)succinate = fumarate + L-arginine. It participates in amino-acid biosynthesis; L-arginine biosynthesis; L-arginine from L-ornithine and carbamoyl phosphate: step 3/3. The sequence is that of Argininosuccinate lyase from Xanthomonas campestris pv. campestris (strain B100).